The primary structure comprises 328 residues: Cytochrome c biogenesis protein CcsA (328 aa).

The next 8 helical transmembrane spans lie at 13 to 33 (ISFSVVSIVMTIYFLTLLVNL), 46 to 66 (GIIITFFSITGFLFTRWIFSG), 73 to 93 (LYESLIFLSWAFSIIHMISFF), 101 to 121 (LNAITAPSAIFIQGFATSGLL), 146 to 166 (MVLGYGALLCGSLLSIALLVI), 234 to 254 (IISLGFLFLTIGILSGAVWAN), 263 to 283 (WDPKETWAFITWTIFAIYLHI), and 295 to 315 (AIVASIGFLVIWICYFGVNLL).

It belongs to the CcmF/CycK/Ccl1/NrfE/CcsA family. As to quaternary structure, may interact with Ccs1.

It is found in the plastid. The protein resides in the chloroplast thylakoid membrane. Functionally, required during biogenesis of c-type cytochromes (cytochrome c6 and cytochrome f) at the step of heme attachment. The protein is Cytochrome c biogenesis protein CcsA of Aethionema grandiflorum (Persian stone-cress).